A 354-amino-acid chain; its full sequence is 3-isopropylmalate dehydrogenase (354 aa).

Residues arginine 96, arginine 106, arginine 132, and aspartate 223 each coordinate substrate. 3 residues coordinate Mg(2+): aspartate 223, aspartate 247, and aspartate 251. Position 283–295 (283–295 (GSAPDIAGQGKAD)) interacts with NAD(+).

The protein belongs to the isocitrate and isopropylmalate dehydrogenases family. LeuB type 2 subfamily. As to quaternary structure, homodimer. The cofactor is Mg(2+). Requires Mn(2+) as cofactor.

The protein localises to the cytoplasm. It catalyses the reaction (2R,3S)-3-isopropylmalate + NAD(+) = 4-methyl-2-oxopentanoate + CO2 + NADH. Its pathway is amino-acid biosynthesis; L-leucine biosynthesis; L-leucine from 3-methyl-2-oxobutanoate: step 3/4. In terms of biological role, catalyzes the oxidation of 3-carboxy-2-hydroxy-4-methylpentanoate (3-isopropylmalate) to 3-carboxy-4-methyl-2-oxopentanoate. The product decarboxylates to 4-methyl-2 oxopentanoate. This is 3-isopropylmalate dehydrogenase from Thermobifida fusca (strain YX).